Here is a 166-residue protein sequence, read N- to C-terminus: Large ribosomal subunit protein uL11 (166 aa).

This sequence belongs to the universal ribosomal protein uL11 family.

The polypeptide is Large ribosomal subunit protein uL11 (rpl12) (Dictyostelium discoideum (Social amoeba)).